The primary structure comprises 58 residues: Attractin (58 aa).

Cystine bridges form between Cys4–Cys41, Cys13–Cys33, and Cys20–Cys26. A glycan (N-linked (GlcNAc...) asparagine) is linked at Asn8.

In terms of tissue distribution, produced by the albumen gland of the egg cordons.

It is found in the secreted. Water-borne pheromone that attract the marine mollusk Aplysia into breeding aggregations and coordinate male and female reproductive behavior within the aggregation. This chain is Attractin (ATT), found in Aplysia fasciata (Mottled sea hare).